The following is an 86-amino-acid chain: Putative membrane protein insertion efficiency factor (86 aa).

Positions 66-86 (PLHEGGDDPVPPRKNDDNREN) are disordered.

The protein belongs to the UPF0161 family.

The protein localises to the cell inner membrane. Its function is as follows. Could be involved in insertion of integral membrane proteins into the membrane. This is Putative membrane protein insertion efficiency factor from Proteus mirabilis (strain HI4320).